The sequence spans 181 residues: Ankyrin repeat-containing protein YGL242C (181 aa).

Position 1 is an N-acetylmethionine (methionine 1). 2 ANK repeats span residues 49-78 and 85-120; these read LGNT…EIEI and DGDT…DPRV. A disordered region spans residues 151–181; it reads IDSTNGSGDNNEDGEMIDDGPSDDDEEDDKK. Acidic residues predominate over residues 160-181; it reads NNEDGEMIDDGPSDDDEEDDKK. Serine 172 carries the phosphoserine modification.

In Saccharomyces cerevisiae (strain ATCC 204508 / S288c) (Baker's yeast), this protein is Ankyrin repeat-containing protein YGL242C.